We begin with the raw amino-acid sequence, 40 residues long: MSAEALADPKADPLAGPNPDADPEAINLKAIAALAKKLLG.

A signal peptide spans 1-7; that stretch reads MSAEALA. A disordered region spans residues 1-22; it reads MSAEALADPKADPLAGPNPDAD. 4 AXPX repeats span residues 7–10, 11–14, 15–18, and 19–22; these read ADPK, ADPL, AGPN, and PDAD. The propeptide occupies 8–25; it reads DPKADPLAGPNPDADPEA. Leucine 39 carries the leucine amide modification.

It belongs to the MCD family. Mastoparan subfamily. In terms of tissue distribution, expressed by the venom gland.

It is found in the secreted. Functionally, shows mast cell degranulation and antimicrobial activities against the Gram-negative bacteria E.coli ATCC 25922 (MIC=6.0 ug/ml), the Gram-positive bacteria S.aureus ATCC 2592 (MIC=3.0 ug/ml) and the fungus C.albicans ATCC 2002 (MIC=12 ug/ml). Exhibits little hemolytic activity against washed human erythrocytes. Its mast cell degranulation activity may be related to the activation of G-protein coupled receptors in mast cells as well as interaction with other proteins located in cell endosomal membranes in the mast cells. The protein is Mastoparan-like peptide 12c of Vespa magnifica (Hornet).